The primary structure comprises 276 residues: Mediator of RNA polymerase II transcription subunit 7 (276 aa).

Basic and acidic residues-rich tracts occupy residues 1 to 11 (MADADAQRQAE) and 234 to 263 (FGRE…RDAQ). Disordered stretches follow at residues 1 to 27 (MADA…PPPF) and 234 to 276 (FGRE…MLSQ).

It belongs to the Mediator complex subunit 7 family. As to quaternary structure, component of the Mediator complex.

It localises to the nucleus. In terms of biological role, component of the Mediator complex, a coactivator involved in the regulated transcription of nearly all RNA polymerase II-dependent genes. Mediator functions as a bridge to convey information from gene-specific regulatory proteins to the basal RNA polymerase II transcription machinery. Mediator is recruited to promoters by direct interactions with regulatory proteins and serves as a scaffold for the assembly of a functional preinitiation complex with RNA polymerase II and the general transcription factors. The chain is Mediator of RNA polymerase II transcription subunit 7 (MED7) from Phaeosphaeria nodorum (strain SN15 / ATCC MYA-4574 / FGSC 10173) (Glume blotch fungus).